The primary structure comprises 497 residues: Lysine--tRNA ligase (497 aa).

Mg(2+) contacts are provided by Glu409 and Glu416.

It belongs to the class-II aminoacyl-tRNA synthetase family. In terms of assembly, homodimer. Mg(2+) serves as cofactor.

Its subcellular location is the cytoplasm. It carries out the reaction tRNA(Lys) + L-lysine + ATP = L-lysyl-tRNA(Lys) + AMP + diphosphate. The polypeptide is Lysine--tRNA ligase (Streptococcus pyogenes serotype M3 (strain ATCC BAA-595 / MGAS315)).